We begin with the raw amino-acid sequence, 183 residues long: Protein SHI RELATED SEQUENCE 6 (183 aa).

Positions 41, 44, 52, 57, 61, and 68 each coordinate Zn(2+). Positions 41 to 68 form a DNA-binding region, zn(2)-C6 fungal-type; degenerate; it reads CRDCGNRAKKECLFERCRTCCKSRGYNC. Residues 79-88 are compositionally biased toward low complexity; that stretch reads SSATRSSSSP. Residues 79–121 form a disordered region; the sequence is SSATRSSSSPSERKKKLKIDKQSSPNVSLLPTTTSRQERGFRE. Residues 100 to 113 show a composition bias toward polar residues; sequence QSSPNVSLLPTTTS. Residues 157 to 160 carry the Required for homo- and heterodimerization motif; the sequence is ISGH.

This sequence belongs to the SHI protein family.

It is found in the nucleus. Functionally, transcription activator that binds DNA on 5'-ACTCTAC-3' and promotes auxin homeostasis-regulating gene expression (e.g. YUC genes), as well as genes affecting stamen development, cell expansion and timing of flowering. Synergistically with other SHI-related proteins, regulates gynoecium, stamen and leaf development in a dose-dependent manner, controlling apical-basal patterning. Promotes style and stigma formation, and influences vascular development during gynoecium development. May also have a role in the formation and/or maintenance of the shoot apical meristem (SAM). The protein is Protein SHI RELATED SEQUENCE 6 (SRS6) of Arabidopsis thaliana (Mouse-ear cress).